Consider the following 756-residue polypeptide: Nucleomorphin (756 aa).

A compositionally biased stretch (polar residues) spans 1-10 (MDLDYSSDNS). The interval 1–113 (MDLDYSSDNS…SQSNEDLSSS (113 aa)) is disordered. 2 stretches are compositionally biased toward low complexity: residues 16–66 (NQNN…RPSS) and 75–94 (NNNN…NNNN). Residues 95 to 113 (GATISHPPTSQSNEDLSSS) are compositionally biased toward polar residues. A BRCT domain is found at 124–216 (LNSNIFENLG…ELLGVENYLV (93 aa)). 4 disordered regions span residues 229–251 (NSSQ…INEQ), 272–298 (PSSL…LKSE), 359–403 (KIDL…NKNN), and 422–463 (TSST…LLNL). Low complexity-rich tracts occupy residues 285–298 (LQTQ…LKSE), 364–401 (NNNN…NKNK), and 422–432 (TSSTSSTLSSS). Over residues 448–459 (KSKKKFSQKKNH) the composition is skewed to basic residues. The Nuclear localization signal signature appears at 464-480 (KKSYQDPEIIAHSRPRK). A calmodulin binding region spans residues 495 to 512 (ANYISNLDGFKYYARANK). The segment covering 514–529 (SLNSNATTSGGNNRSI) has biased composition (polar residues). The disordered stretch occupies residues 514–587 (SLNSNATTSG…SDEDDFDSDE (74 aa)). Acidic residues predominate over residues 536-587 (YDDEEEDEEDEDEEDEEEDEEEEEEEEEEEEDYDDEDLNDEESDEDDFDSDE). The tract at residues 537-588 (DDEEEDEEDEDEEDEEEDEEEEEEEEEEEEDYDDEDLNDEESDEDDFDSDED) is DEED region. 2 calmodulin binding regions span residues 589-606 (VSRF…KIYK) and 596-613 (KLLQ…RFEH). Disordered stretches follow at residues 613-639 (HSRQ…SHSR) and 660-700 (LSPT…RTNI). A compositionally biased stretch (polar residues) spans 668–691 (LSNQFHQDGGNNTTDGNLFNNFST).

Interacts with calmodulin and CBPD1 in the presence of Ca(2+).

It is found in the nucleus. The sequence is that of Nucleomorphin (numA) from Dictyostelium discoideum (Social amoeba).